A 61-amino-acid polypeptide reads, in one-letter code: Conotoxin Tx-D021 (61 aa).

A signal peptide spans 1–22 (MRCLPVFVILLLLIASTPSVDA). Positions 23–48 (RAKTRDDMSLASFHDDAKRILQILQD) are excised as a propeptide. C60 bears the Cysteine amide mark.

This sequence belongs to the conotoxin T superfamily. Post-translationally, contains 2 disulfide bonds that can be either 'C1-C3, C2-C4' or 'C1-C4, C2-C3', since these disulfide connectivities have been observed for conotoxins with cysteine framework V (for examples, see AC P0DQQ7 and AC P81755). As to expression, expressed by the venom duct.

The protein resides in the secreted. This Conus textile (Cloth-of-gold cone) protein is Conotoxin Tx-D021.